The primary structure comprises 227 residues: Large ribosomal subunit protein uL3 (227 aa).

Residues 146 to 167 form a disordered region; sequence RGPMAHGSKFHRHQGSNGACSS.

The protein belongs to the universal ribosomal protein uL3 family. As to quaternary structure, part of the 50S ribosomal subunit. Forms a cluster with proteins L14 and L19.

Its function is as follows. One of the primary rRNA binding proteins, it binds directly near the 3'-end of the 23S rRNA, where it nucleates assembly of the 50S subunit. This Agathobacter rectalis (strain ATCC 33656 / DSM 3377 / JCM 17463 / KCTC 5835 / VPI 0990) (Eubacterium rectale) protein is Large ribosomal subunit protein uL3.